We begin with the raw amino-acid sequence, 400 residues long: S-adenosylmethionine synthase (400 aa).

Position 17 (H17) interacts with ATP. A Mg(2+)-binding site is contributed by D19. E45 is a binding site for K(+). Residues E58 and Q101 each contribute to the L-methionine site. The interval Q101–Q111 is flexible loop. ATP is bound by residues D177 to K179, R244 to F245, D253, R259 to K260, A276, and K280. D253 serves as a coordination point for L-methionine. K284 contacts L-methionine.

The protein belongs to the AdoMet synthase family. Homotetramer; dimer of dimers. It depends on Mg(2+) as a cofactor. K(+) is required as a cofactor.

The protein resides in the cytoplasm. The enzyme catalyses L-methionine + ATP + H2O = S-adenosyl-L-methionine + phosphate + diphosphate. It functions in the pathway amino-acid biosynthesis; S-adenosyl-L-methionine biosynthesis; S-adenosyl-L-methionine from L-methionine: step 1/1. In terms of biological role, catalyzes the formation of S-adenosylmethionine (AdoMet) from methionine and ATP. The overall synthetic reaction is composed of two sequential steps, AdoMet formation and the subsequent tripolyphosphate hydrolysis which occurs prior to release of AdoMet from the enzyme. The chain is S-adenosylmethionine synthase from Bacillus licheniformis (strain ATCC 14580 / DSM 13 / JCM 2505 / CCUG 7422 / NBRC 12200 / NCIMB 9375 / NCTC 10341 / NRRL NRS-1264 / Gibson 46).